We begin with the raw amino-acid sequence, 256 residues long: Cilia- and flagella-associated protein 410 (256 aa).

LRR repeat units follow at residues 19–40, 41–62, and 63–84; these read SVRKLNCWGSRLTDISICQEMP, SLEVITLSVNSISTLEPVSRCQ, and RLSELYLRRNRIPSLAELFYLK. The LRRCT domain occupies 97–137; the sequence is NPCCGTSPHRYRMTVLRTLPRLQKLDNQAVTEEELSRALSE. Disordered regions lie at residues 129–156 and 168–212; these read EELSRALSEGEEITAAPEREGTGHGGPK and AETG…SSHR. Residues S136 and S177 each carry the phosphoserine modification.

Found in a complex with CFAP410, NEK1 and SPATA7. Interacts with NEK1. In terms of tissue distribution, widely expressed. Expressed in the retina.

It is found in the mitochondrion. It localises to the cytoplasm. The protein resides in the cytoskeleton. Its subcellular location is the cilium basal body. The protein localises to the cell projection. It is found in the cilium. It localises to the photoreceptor outer segment. Its function is as follows. Plays a role in cilia formation and/or maintenance. Plays a role in the regulation of cell morphology and cytoskeletal organization. Involved in DNA damage repair. This is Cilia- and flagella-associated protein 410 from Homo sapiens (Human).